We begin with the raw amino-acid sequence, 1183 residues long: DNA-directed RNA polymerase subunit beta (1183 aa).

It belongs to the RNA polymerase beta chain family. As to quaternary structure, the RNAP catalytic core consists of 2 alpha, 1 beta, 1 beta' and 1 omega subunit. When a sigma factor is associated with the core the holoenzyme is formed, which can initiate transcription.

It catalyses the reaction RNA(n) + a ribonucleoside 5'-triphosphate = RNA(n+1) + diphosphate. Its function is as follows. DNA-dependent RNA polymerase catalyzes the transcription of DNA into RNA using the four ribonucleoside triphosphates as substrates. This chain is DNA-directed RNA polymerase subunit beta, found in Staphylococcus aureus (strain JH9).